Consider the following 130-residue polypeptide: Ribosome-binding factor A (130 aa).

Belongs to the RbfA family. In terms of assembly, monomer. Binds 30S ribosomal subunits, but not 50S ribosomal subunits or 70S ribosomes.

Its subcellular location is the cytoplasm. Its function is as follows. One of several proteins that assist in the late maturation steps of the functional core of the 30S ribosomal subunit. Associates with free 30S ribosomal subunits (but not with 30S subunits that are part of 70S ribosomes or polysomes). Required for efficient processing of 16S rRNA. May interact with the 5'-terminal helix region of 16S rRNA. In Prochlorococcus marinus (strain MIT 9215), this protein is Ribosome-binding factor A.